Reading from the N-terminus, the 429-residue chain is Glutamate-1-semialdehyde 2,1-aminomutase (429 aa).

N6-(pyridoxal phosphate)lysine is present on lysine 267.

The protein belongs to the class-III pyridoxal-phosphate-dependent aminotransferase family. HemL subfamily. As to quaternary structure, homodimer. Pyridoxal 5'-phosphate serves as cofactor.

The protein localises to the cytoplasm. It carries out the reaction (S)-4-amino-5-oxopentanoate = 5-aminolevulinate. The protein operates within porphyrin-containing compound metabolism; protoporphyrin-IX biosynthesis; 5-aminolevulinate from L-glutamyl-tRNA(Glu): step 2/2. The protein is Glutamate-1-semialdehyde 2,1-aminomutase of Xanthomonas axonopodis pv. citri (strain 306).